A 310-amino-acid polypeptide reads, in one-letter code: Putative S-adenosyl-L-methionine-dependent methyltransferase MMAR_0357 (310 aa).

S-adenosyl-L-methionine is bound by residues Asp-132 and 161–162 (DL).

It belongs to the UPF0677 family.

In terms of biological role, exhibits S-adenosyl-L-methionine-dependent methyltransferase activity. The polypeptide is Putative S-adenosyl-L-methionine-dependent methyltransferase MMAR_0357 (Mycobacterium marinum (strain ATCC BAA-535 / M)).